A 380-amino-acid polypeptide reads, in one-letter code: MRSRVLWGAARWLWPRRAVGPARRPLSSGSPPLEELFTRGGPLRTFLERQAGSEAHLKVRRPELLAVIKLLNEKERELRETEHLLHDENEDLRKLAENEITLCQKEITQLKHQIILLLVPSEETDENDLILEVTAGVGGQEAMLFTSEIFDMYQQYAAFKRWHFETLEYFPSELGGLRHASASIGGSEAYRHMKFEGGVHRVQRVPKTEKQGRVHTSTMTVAILPQPTEINLVINPKDLRIDTKRASGAGGQHVNTTDSAVRIVHLPTGVVSECQQERSQLKNKELAMTKLRAKLYSMHLEEEINKRQNARKIQIGSKGRSEKIRTYNFPQNRVTDHRINKTLHDLETFMQGDYLLDELVQSLKEYADYESLVEIISQKV.

A mitochondrion-targeting transit peptide spans 1–26; sequence MRSRVLWGAARWLWPRRAVGPARRPL. A coiled-coil region spans residues 63-117; the sequence is ELLAVIKLLNEKERELRETEHLLHDENEDLRKLAENEITLCQKEITQLKHQIILL. The GGQ domain stretch occupies residues 236-300; sequence PKDLRIDTKR…LRAKLYSMHL (65 aa). The GGQ motif lies at 250–252; that stretch reads GGQ. Glutamine 252 is subject to N5-methylglutamine.

The protein belongs to the prokaryotic/mitochondrial release factor family. Post-translationally, methylation of glutamine in the GGQ triplet by HEMK1 is conserved from bacteria to mammals. In terms of tissue distribution, expressed in skeletal muscle (at protein level).

It is found in the mitochondrion. Functionally, mitochondrial peptide chain release factor that directs the termination of translation in response to the peptide chain termination codons UAA and UAG. The polypeptide is Peptide chain release factor 1-like, mitochondrial (Homo sapiens (Human)).